The following is a 289-amino-acid chain: Metal-staphylopine import system permease protein CntC (289 aa).

The next 5 membrane-spanning stretches (helical) occupy residues 13–33 (AVIA…APLV), 77–97 (LLYV…LGFL), 115–135 (VMLA…FGMG), 194–214 (IAII…GFSF), and 249–269 (IAIV…QIAI). One can recognise an ABC transmembrane type-1 domain in the interval 73–262 (IRPSLLYVFV…IIVMAFNFLS (190 aa)).

This sequence belongs to the binding-protein-dependent transport system permease family. In terms of assembly, the complex is composed of two ATP-binding proteins (CntD and CntF), two transmembrane proteins (CntB and CntC) and a solute-binding protein (CntA).

Its subcellular location is the cell membrane. Nickel/cobalt import is reduced in the presence of zinc. Its function is as follows. Part of the ABC transporter complex CntABCDF (Opp1) involved in the uptake of metal in complex with the metallophore staphylopine (StP). Involved in the import of divalent metals ions such as nickel, cobalt and zinc. Probably responsible for the translocation of the substrate across the membrane. Plays a major role in nickel/cobalt import in zinc-depleted conditions. Contributes to virulence. Required for full urease activity in vitro. The chain is Metal-staphylopine import system permease protein CntC from Staphylococcus aureus (strain NCTC 8325 / PS 47).